A 374-amino-acid polypeptide reads, in one-letter code: 4-hydroxy-3-methylbut-2-en-1-yl diphosphate synthase (flavodoxin) (374 aa).

The [4Fe-4S] cluster site is built by Cys-268, Cys-271, Cys-303, and Glu-310.

Belongs to the IspG family. [4Fe-4S] cluster is required as a cofactor.

The catalysed reaction is (2E)-4-hydroxy-3-methylbut-2-enyl diphosphate + oxidized [flavodoxin] + H2O + 2 H(+) = 2-C-methyl-D-erythritol 2,4-cyclic diphosphate + reduced [flavodoxin]. It participates in isoprenoid biosynthesis; isopentenyl diphosphate biosynthesis via DXP pathway; isopentenyl diphosphate from 1-deoxy-D-xylulose 5-phosphate: step 5/6. Its function is as follows. Converts 2C-methyl-D-erythritol 2,4-cyclodiphosphate (ME-2,4cPP) into 1-hydroxy-2-methyl-2-(E)-butenyl 4-diphosphate. The polypeptide is 4-hydroxy-3-methylbut-2-en-1-yl diphosphate synthase (flavodoxin) (Geobacillus kaustophilus (strain HTA426)).